A 201-amino-acid polypeptide reads, in one-letter code: MEKFTKLTGVAAPLPVVNIDTDMIIPKDYLKTIKRTGLGTGLFAEARYHQDGSINQDFVLNKPAYQNAKILVAGDNFGCGSSREHAPWALLDFGIRCVISTSFADIFYNNCFKNGILPIVVSQENLEKLMDDAQRGSNAVVTVDLETQEITGPDGGSISFEIDEFKRHCMLNGLDDIGLTMEKSSAIASFETANAASRPWA.

It belongs to the LeuD family. LeuD type 1 subfamily. In terms of assembly, heterodimer of LeuC and LeuD.

The enzyme catalyses (2R,3S)-3-isopropylmalate = (2S)-2-isopropylmalate. It functions in the pathway amino-acid biosynthesis; L-leucine biosynthesis; L-leucine from 3-methyl-2-oxobutanoate: step 2/4. Functionally, catalyzes the isomerization between 2-isopropylmalate and 3-isopropylmalate, via the formation of 2-isopropylmaleate. This is 3-isopropylmalate dehydratase small subunit from Allorhizobium ampelinum (strain ATCC BAA-846 / DSM 112012 / S4) (Agrobacterium vitis (strain S4)).